The chain runs to 292 residues: Small ribosomal subunit biogenesis GTPase RsgA (292 aa).

The 158-residue stretch at 64-221 folds into the CP-type G domain; that stretch reads RSELFRPAVA…LVDTPGFSSL (158 aa). GTP is bound by residues 113-116 and 164-172; these read NKMD and GPSGVGKST. Zn(2+) is bound by residues Cys245, Cys250, His252, and Cys258.

It belongs to the TRAFAC class YlqF/YawG GTPase family. RsgA subfamily. Monomer. Associates with 30S ribosomal subunit, binds 16S rRNA. Zn(2+) serves as cofactor.

The protein localises to the cytoplasm. One of several proteins that assist in the late maturation steps of the functional core of the 30S ribosomal subunit. Helps release RbfA from mature subunits. May play a role in the assembly of ribosomal proteins into the subunit. Circularly permuted GTPase that catalyzes slow GTP hydrolysis, GTPase activity is stimulated by the 30S ribosomal subunit. The sequence is that of Small ribosomal subunit biogenesis GTPase RsgA from Clostridium botulinum (strain Kyoto / Type A2).